The sequence spans 215 residues: Beta-crystallin A3 (215 aa).

Residues 1-30 (MGEAAVPPELDTFPAAKMAQTNPLPVPMGP) are N-terminal arm. 2 Beta/gamma crystallin 'Greek key' domains span residues 31-70 (WKIT…KVEC) and 71-117 (GAWV…RPVC). Residues 118 to 123 (SANHKE) form a connecting peptide region. 2 Beta/gamma crystallin 'Greek key' domains span residues 124 to 165 (SKIT…KIPC) and 166 to 214 (GAWV…RRIQ).

The protein belongs to the beta/gamma-crystallin family. Homo/heterodimer, or complexes of higher-order. The structure of beta-crystallin oligomers seems to be stabilized through interactions between the N-terminal arms.

In terms of biological role, crystallins are the dominant structural components of the vertebrate eye lens. The polypeptide is Beta-crystallin A3 (CRYBA1) (Gallus gallus (Chicken)).